Here is a 227-residue protein sequence, read N- to C-terminus: MATWSNFNLQNSASPLMEQIIFFHDHTLVILIMITILVGYLMISLFFNSYINRFLLEGQMIELIWTILPAITLIFIALPSLRLLYLLDELNNPLITLKSIGHQWYWSYEYSDFKNIQFDSYMIPINEMKNDNFRLLDVDNRIVLPMNNQIRILVTATDVIHSWTIPSLGVKVDANPGRLNQTNFFINRPGIFYGQCSEICGANHSFMPIVIESISIKNFINWINNYS.

The Mitochondrial intermembrane portion of the chain corresponds to 1-26 (MATWSNFNLQNSASPLMEQIIFFHDH). Residues 27-51 (TLVILIMITILVGYLMISLFFNSYI) form a helical membrane-spanning segment. Residues 52–62 (NRFLLEGQMIE) lie on the Mitochondrial matrix side of the membrane. The helical transmembrane segment at 63 to 81 (LIWTILPAITLIFIALPSL) threads the bilayer. Topologically, residues 82–227 (RLLYLLDELN…NFINWINNYS (146 aa)) are mitochondrial intermembrane. Residues H161, C196, E198, C200, H204, and M207 each contribute to the Cu cation site. E198 is a binding site for Mg(2+).

It belongs to the cytochrome c oxidase subunit 2 family. In terms of assembly, component of the cytochrome c oxidase (complex IV, CIV), a multisubunit enzyme composed of a catalytic core of 3 subunits and several supernumerary subunits. The complex exists as a monomer or a dimer and forms supercomplexes (SCs) in the inner mitochondrial membrane with ubiquinol-cytochrome c oxidoreductase (cytochrome b-c1 complex, complex III, CIII). It depends on Cu cation as a cofactor.

It localises to the mitochondrion inner membrane. It catalyses the reaction 4 Fe(II)-[cytochrome c] + O2 + 8 H(+)(in) = 4 Fe(III)-[cytochrome c] + 2 H2O + 4 H(+)(out). Functionally, component of the cytochrome c oxidase, the last enzyme in the mitochondrial electron transport chain which drives oxidative phosphorylation. The respiratory chain contains 3 multisubunit complexes succinate dehydrogenase (complex II, CII), ubiquinol-cytochrome c oxidoreductase (cytochrome b-c1 complex, complex III, CIII) and cytochrome c oxidase (complex IV, CIV), that cooperate to transfer electrons derived from NADH and succinate to molecular oxygen, creating an electrochemical gradient over the inner membrane that drives transmembrane transport and the ATP synthase. Cytochrome c oxidase is the component of the respiratory chain that catalyzes the reduction of oxygen to water. Electrons originating from reduced cytochrome c in the intermembrane space (IMS) are transferred via the dinuclear copper A center (CU(A)) of subunit 2 and heme A of subunit 1 to the active site in subunit 1, a binuclear center (BNC) formed by heme A3 and copper B (CU(B)). The BNC reduces molecular oxygen to 2 water molecules using 4 electrons from cytochrome c in the IMS and 4 protons from the mitochondrial matrix. The protein is Cytochrome c oxidase subunit 2 (COII) of Choristoneura rosaceana (Oblique banded leafroller).